The chain runs to 131 residues: MSMSDPIADLLTRIRNAQMVAKPTVMVPSSKVKVAIAQVLKDEGYIDGFQVKTEAGKSELEIALKYYAGRPVIERIERVSRPGLRVYKGRDAIPQVMNGLGVAIVTTPKGVMTDRKARATGVGGEVLCYVA.

Belongs to the universal ribosomal protein uS8 family. As to quaternary structure, part of the 30S ribosomal subunit. Contacts proteins S5 and S12.

Its function is as follows. One of the primary rRNA binding proteins, it binds directly to 16S rRNA central domain where it helps coordinate assembly of the platform of the 30S subunit. In Verminephrobacter eiseniae (strain EF01-2), this protein is Small ribosomal subunit protein uS8.